A 486-amino-acid chain; its full sequence is N-succinylglutamate 5-semialdehyde dehydrogenase (486 aa).

220–225 contacts NAD(+); that stretch reads GSSRTG. Catalysis depends on residues glutamate 243 and cysteine 277.

Belongs to the aldehyde dehydrogenase family. AstD subfamily.

It carries out the reaction N-succinyl-L-glutamate 5-semialdehyde + NAD(+) + H2O = N-succinyl-L-glutamate + NADH + 2 H(+). The protein operates within amino-acid degradation; L-arginine degradation via AST pathway; L-glutamate and succinate from L-arginine: step 4/5. In terms of biological role, catalyzes the NAD-dependent reduction of succinylglutamate semialdehyde into succinylglutamate. In Shewanella sp. (strain W3-18-1), this protein is N-succinylglutamate 5-semialdehyde dehydrogenase.